Here is a 432-residue protein sequence, read N- to C-terminus: Peptidase B (432 aa).

2 residues coordinate Mn(2+): K196 and D201. K208 is a catalytic residue. Residues D219, D278, and E280 each contribute to the Mn(2+) site. R282 is an active-site residue.

The protein belongs to the peptidase M17 family. In terms of assembly, homohexamer. It depends on Mn(2+) as a cofactor.

It is found in the cytoplasm. The catalysed reaction is Release of an N-terminal amino acid, Xaa, from a peptide or arylamide. Xaa is preferably Glu or Asp but may be other amino acids, including Leu, Met, His, Cys and Gln.. In terms of biological role, probably plays an important role in intracellular peptide degradation. The protein is Peptidase B of Yersinia pestis bv. Antiqua (strain Antiqua).